The primary structure comprises 590 residues: MELENIVANTVLLKAREGGGGKRKGKSKKWKEILKFPHISQCEDLRRTIDRDYCSLCDKQPIGRLLFRQFCETRPGLECYIQFLDSVAEYEVTPDEKLGEKGKEIMTKYLTPKSPVFIAQVGQDLVSQTEEKLLQKPCKELFSACAQSVHEYLRGEPFHEYLDSMFFDRFLQWKWLERQPVTKNTFRQYRVLGKGGFGEVCACQVRATGKMYACKRLEKKRIKKRKGESMALNEKQILEKVNSQFVVNLAYAYETKDALCLVLTIMNGGDLKFHIYNMGNPGFEEERALFYAAEILCGLEDLHRENTVYRDLKPENILLDDYGHIRISDLGLAVKIPEGDLIRGRVGTVGYMAPEVLNNQRYGLSPDYWGLGCLIYEMIEGQSPFRGRKEKVKREEVDRRVLETEEVYSHKFSEEAKSICKMLLTKDAKQRLGCQEEGAAEVKRHPFFRNMNFKRLEAGMLDPPFVPDPRAVYCKDVLDIEQFSTVKGVNLDHTDDDFYSKFSTGSVSIPWQNEMIETECFKELNVFGPNGTLPPDLNRNHPPEPPKKGLLQRLFKRQHQNNSKSSPSSKTSFNHHINSNHVSSNSTGSS.

Residues 1–185 (MELENIVANT…LERQPVTKNT (185 aa)) are N-terminal. An interaction with calmodulin region spans residues 20-39 (GGKRKGKSKKWKEILKFPHI). Residues 53 to 171 (YCSLCDKQPI…LDSMFFDRFL (119 aa)) form the RGS domain. The Protein kinase domain occupies 186–448 (FRQYRVLGKG…AAEVKRHPFF (263 aa)). Residues 192 to 200 (LGKGGFGEV) and Lys-215 contribute to the ATP site. The active-site Proton acceptor is Asp-311. The Nuclear localization signal motif lies at 388 to 395 (RKEKVKRE). Residues 449–514 (RNMNFKRLEA…GSVSIPWQNE (66 aa)) form the AGC-kinase C-terminal domain. Ser-484 is subject to Phosphoserine; by autocatalysis. Residue Thr-485 is modified to Phosphothreonine; by autocatalysis. Residues 531–590 (GTLPPDLNRNHPPEPPKKGLLQRLFKRQHQNNSKSSPSSKTSFNHHINSNHVSSNSTGSS) are disordered. The segment covering 538-547 (NRNHPPEPPK) has biased composition (basic and acidic residues). The tract at residues 546–565 (PKKGLLQRLFKRQHQNNSKS) is sufficient for membrane localization. A compositionally biased stretch (low complexity) spans 563–590 (SKSSPSSKTSFNHHINSNHVSSNSTGSS). Ser-579 is modified (phosphoserine).

Belongs to the protein kinase superfamily. AGC Ser/Thr protein kinase family. GPRK subfamily. As to quaternary structure, interacts with ST13 (via the C-terminus 303-319 AA). Interacts with TP53/p53. Interacts with HTR4 (via C-terminus 330-346 AA); this interaction is promoted by 5-HT (serotonin). Interacts with HDAC5. Interacts with GIT1. In terms of processing, autophosphorylated. Autophosphorylation may play a critical role in the regulation of GRK5 kinase activity. As to expression, highest levels in heart, placenta, lung &gt; skeletal muscle &gt; brain, liver, pancreas &gt; kidney.

The protein localises to the cytoplasm. It is found in the nucleus. It localises to the cell membrane. The catalysed reaction is [G-protein-coupled receptor] + ATP = [G-protein-coupled receptor]-phosphate + ADP + H(+). With respect to regulation, inhibited by calmodulin with an IC(50) of 50 nM. Calmodulin inhibits GRK5 association with receptor and phospholipid. Its function is as follows. Serine/threonine kinase that phosphorylates preferentially the activated forms of a variety of G-protein-coupled receptors (GPCRs). Such receptor phosphorylation initiates beta-arrestin-mediated receptor desensitization, internalization, and signaling events leading to their down-regulation. Phosphorylates a variety of GPCRs, including adrenergic receptors, muscarinic acetylcholine receptors (more specifically Gi-coupled M2/M4 subtypes), dopamine receptors and opioid receptors. In addition to GPCRs, also phosphorylates various substrates: Hsc70-interacting protein/ST13, TP53/p53, HDAC5, and arrestin-1/ARRB1. Phosphorylation of ARRB1 by GRK5 inhibits G-protein independent MAPK1/MAPK3 signaling downstream of 5HT4-receptors. Phosphorylation of HDAC5, a repressor of myocyte enhancer factor 2 (MEF2) leading to nuclear export of HDAC5 and allowing MEF2-mediated transcription. Phosphorylation of TP53/p53, a crucial tumor suppressor, inhibits TP53/p53-mediated apoptosis. Phosphorylation of ST13 regulates internalization of the chemokine receptor. Phosphorylates rhodopsin (RHO) (in vitro) and a non G-protein-coupled receptor, LRP6 during Wnt signaling (in vitro). This is G protein-coupled receptor kinase 5 (GRK5) from Homo sapiens (Human).